The following is a 576-amino-acid chain: Small ribosomal subunit protein mS80 (rPPR6) (576 aa).

The N-terminal 76 residues, 1-76, are a transit peptide targeting the mitochondrion; it reads MLRSFLCRSQ…SLPADEIPIS (76 aa). 9 PPR repeats span residues 230–264, 265–299, 300–336, 341–370, 371–405, 406–440, 441–475, 476–510, and 511–546; these read NLEILNELIALFGKLGKSKAAFDVFSKTEEFGFTP, NAKTYYLTLEALCKRSFMDWACSVCEKMLKSGVLS, EGEQMGNIITWFCKEGKAEEAYSVYELAKTKEKSLPP, TLITALCKNDGTITFAQEMLGDLSGEARRR, GIKPFSDVIHSLCRMRNVKDAKALLLDMISKGPAP, GNAVFNLVVHACSKTGDLDEAKEVLKLMESRGLKP, DVYTYTVIISGYAKGGMMDEAQEILAEAKKKHKKL, SPVTYHALIRGYCKIEEYDEALKLLNEMDRFGVQP, and NADEYNKLIQSFCLKALDWEKAEVLFEEMKQKGLHL.

This sequence belongs to the PPR family. P subfamily. Component of the mitochondrial ribosome small subunit.

The protein localises to the mitochondrion. The protein is Small ribosomal subunit protein mS80 (rPPR6) of Arabidopsis thaliana (Mouse-ear cress).